A 499-amino-acid chain; its full sequence is Probable dipeptidase B (499 aa).

Cys-26 is a catalytic residue.

This sequence belongs to the peptidase C69 family.

The catalysed reaction is an L-aminoacyl-L-amino acid + H2O = 2 an L-alpha-amino acid. The protein is Probable dipeptidase B (pepDB) of Streptococcus pyogenes serotype M18 (strain MGAS8232).